The following is a 562-amino-acid chain: Arginine--tRNA ligase (562 aa).

The 'HIGH' region signature appears at 129–139; sequence ANPTGPLHVGH.

The protein belongs to the class-I aminoacyl-tRNA synthetase family. As to quaternary structure, monomer.

It is found in the cytoplasm. It catalyses the reaction tRNA(Arg) + L-arginine + ATP = L-arginyl-tRNA(Arg) + AMP + diphosphate. The protein is Arginine--tRNA ligase of Xylella fastidiosa (strain M23).